Here is a 463-residue protein sequence, read N- to C-terminus: Interferon-inducible GTPase 5 (463 aa).

In terms of domain architecture, IRG-type G spans 52–234 (TRLEVGVTGE…PMLVTTWEHD (183 aa)). Residues 61-68 (ESGAGKSS), 86-90 (TGVVE), 168-170 (KVD), and 215-217 (SNL) each bind GTP. Phosphoserine is present on residues Ser-246 and Ser-303. The interval 409 to 438 (QGEVSLEAAGDNAVEKRSSGEGTSEEAPLS) is disordered.

Belongs to the TRAFAC class dynamin-like GTPase superfamily. IRG family.

The protein localises to the cell projection. It localises to the cilium. Its subcellular location is the flagellum. The protein resides in the lipid droplet. The catalysed reaction is GTP + H2O = GDP + phosphate + H(+). In terms of biological role, required for sperm motility and therefore male fertility, via positive regulation of spermatozoa fibrous sheath formation. The protein is Interferon-inducible GTPase 5 (Irgc) of Rattus norvegicus (Rat).